Here is a 607-residue protein sequence, read N- to C-terminus: ATP-dependent RNA helicase DBP6 (607 aa).

Residues 1–83 (MFAARFDPSR…GTGEADKRHQ (83 aa)) form a disordered region. Over residues 34–59 (QDESESEMSSAESEDEAMQLDDEEEV) the composition is skewed to acidic residues. Positions 60-69 (VDSKGKENHG) are enriched in basic and acidic residues. A Q motif motif is present at residues 184–192 (AFPIQTALL). The Helicase ATP-binding domain maps to 208 to 388 (RYYTRKVGDI…DLQLHNPKLF (181 aa)). 221–228 (ASTGSGKT) is an ATP binding site. A DEAD box motif is present at residues 328–331 (DEAD). The region spanning 419-578 (ILLRLLPLLS…GSHLFFDEEQ (160 aa)) is the Helicase C-terminal domain.

The protein belongs to the DEAD box helicase family. DDX51/DBP6 subfamily. Associated with pre-ribosomal particles.

It is found in the nucleus. It localises to the nucleolus. It catalyses the reaction ATP + H2O = ADP + phosphate + H(+). In terms of biological role, ATP-binding RNA helicase involved in the biogenesis of 60S ribosomal subunits and is required for the normal formation of 25S and 5.8S rRNAs. This chain is ATP-dependent RNA helicase DBP6 (DBP6), found in Eremothecium gossypii (strain ATCC 10895 / CBS 109.51 / FGSC 9923 / NRRL Y-1056) (Yeast).